The primary structure comprises 126 residues: Holo-[acyl-carrier-protein] synthase (126 aa).

Mg(2+) contacts are provided by D9 and E58.

It belongs to the P-Pant transferase superfamily. AcpS family. Homodimer. Requires Mg(2+) as cofactor.

The protein resides in the cytoplasm. It catalyses the reaction apo-[ACP] + CoA = holo-[ACP] + adenosine 3',5'-bisphosphate + H(+). Its function is as follows. Transfers the 4'-phosphopantetheine moiety from coenzyme A to the 'Ser-36' of acyl-carrier-protein. The chain is Holo-[acyl-carrier-protein] synthase from Escherichia coli O157:H7.